An 801-amino-acid polypeptide reads, in one-letter code: Lon protease 2 (801 aa).

The Lon N-terminal domain occupies 14–209; the sequence is LPMLPVRDIV…LVNEILAAEL (196 aa). Position 361-368 (361-368) interacts with ATP; the sequence is GPPGVGKT. One can recognise a Lon proteolytic domain in the interval 597 to 778; it reads DSQVGVVQGL…DEVFAVAFDK (182 aa). Active-site residues include serine 684 and lysine 727. Residues 780 to 791 are compositionally biased toward basic and acidic residues; the sequence is AKGQEKKPAAKK. The tract at residues 780 to 801 is disordered; the sequence is AKGQEKKPAAKKDPKKTKSLAA. Residues 792–801 show a composition bias toward basic residues; that stretch reads DPKKTKSLAA.

It belongs to the peptidase S16 family. As to quaternary structure, homohexamer. Organized in a ring with a central cavity.

It localises to the cytoplasm. It carries out the reaction Hydrolysis of proteins in presence of ATP.. In terms of biological role, ATP-dependent serine protease that mediates the selective degradation of mutant and abnormal proteins as well as certain short-lived regulatory proteins. Required for cellular homeostasis and for survival from DNA damage and developmental changes induced by stress. Degrades polypeptides processively to yield small peptide fragments that are 5 to 10 amino acids long. Binds to DNA in a double-stranded, site-specific manner. In Bdellovibrio bacteriovorus (strain ATCC 15356 / DSM 50701 / NCIMB 9529 / HD100), this protein is Lon protease 2.